Reading from the N-terminus, the 529-residue chain is MTLSPYLQEVAKRRTFAIISHPDAGKTTITEKVLLFGQAIQTAGTVKGRGSSQHAKSDWMEMEKQRGISITTSVMQFPYHDCLVNLLDTPGHEDFSEDTYRTLTAVDCCLMVIDAAKGVEDRTRKLMEVTRLRDTPILTFMNKLDRDIRDPMELLDEVENELKIGCAPITWPIGCGKLFKGVYHLYKDETYLYQTGKGHTIQEVRIVKGLDNPELDAAVGEDLAQQLRDELELVQGASNEFDHELFLAGEITPVFFGTALGNFGVDHMLDGLVEWAPAPMPRQTDTRTVEAKEEKFTGFVFKIQANMDPKHRDRVAFMRVVSGKYEKGMKMRQVRIGKDVVISDALTFMAGDRSHVEEAYPGDILGLHNHGTIQIGDTFTQGEMMKFTGIPNFAPELFRRIRLKDPLKQKQLLKGLVQLSEEGAVQVFRPIANNDLIVGAVGVLQFDVVVARLKSEYNVEAIYESVNVATARWVECTDAKKFEEFKRKNEVQLALDGGDNLTYIAPTMVNLNLTQERYPDVQFRKTREH.

In terms of domain architecture, tr-type G spans 11-280 (AKRRTFAIIS…GLVEWAPAPM (270 aa)). GTP is bound by residues 20 to 27 (SHPDAGKT), 88 to 92 (DTPGH), and 142 to 145 (NKLD).

It belongs to the TRAFAC class translation factor GTPase superfamily. Classic translation factor GTPase family. PrfC subfamily.

It is found in the cytoplasm. Its function is as follows. Increases the formation of ribosomal termination complexes and stimulates activities of RF-1 and RF-2. It binds guanine nucleotides and has strong preference for UGA stop codons. It may interact directly with the ribosome. The stimulation of RF-1 and RF-2 is significantly reduced by GTP and GDP, but not by GMP. The protein is Peptide chain release factor 3 of Citrobacter koseri (strain ATCC BAA-895 / CDC 4225-83 / SGSC4696).